The primary structure comprises 290 residues: Bifunctional protein FolD (290 aa).

NADP(+) contacts are provided by residues 164–166 (GRS), serine 193, and isoleucine 234.

It belongs to the tetrahydrofolate dehydrogenase/cyclohydrolase family. As to quaternary structure, homodimer.

It catalyses the reaction (6R)-5,10-methylene-5,6,7,8-tetrahydrofolate + NADP(+) = (6R)-5,10-methenyltetrahydrofolate + NADPH. The enzyme catalyses (6R)-5,10-methenyltetrahydrofolate + H2O = (6R)-10-formyltetrahydrofolate + H(+). Its pathway is one-carbon metabolism; tetrahydrofolate interconversion. Catalyzes the oxidation of 5,10-methylenetetrahydrofolate to 5,10-methenyltetrahydrofolate and then the hydrolysis of 5,10-methenyltetrahydrofolate to 10-formyltetrahydrofolate. The sequence is that of Bifunctional protein FolD from Cytophaga hutchinsonii (strain ATCC 33406 / DSM 1761 / CIP 103989 / NBRC 15051 / NCIMB 9469 / D465).